The following is a 289-amino-acid chain: Acetyl-coenzyme A carboxylase carboxyl transferase subunit beta (289 aa).

Residues 28–289 enclose the CoA carboxyltransferase N-terminal domain; that stretch reads VMTKCPKCKK…QGGGMAVWQS (262 aa). 4 residues coordinate Zn(2+): Cys-32, Cys-35, Cys-51, and Cys-54. The segment at 32 to 54 adopts a C4-type zinc-finger fold; that stretch reads CPKCKKIMYTKELLKNLKVCVNC.

Belongs to the AccD/PCCB family. Acetyl-CoA carboxylase is a heterohexamer composed of biotin carboxyl carrier protein (AccB), biotin carboxylase (AccC) and two subunits each of ACCase subunit alpha (AccA) and ACCase subunit beta (AccD). Requires Zn(2+) as cofactor.

It localises to the cytoplasm. It carries out the reaction N(6)-carboxybiotinyl-L-lysyl-[protein] + acetyl-CoA = N(6)-biotinyl-L-lysyl-[protein] + malonyl-CoA. It participates in lipid metabolism; malonyl-CoA biosynthesis; malonyl-CoA from acetyl-CoA: step 1/1. In terms of biological role, component of the acetyl coenzyme A carboxylase (ACC) complex. Biotin carboxylase (BC) catalyzes the carboxylation of biotin on its carrier protein (BCCP) and then the CO(2) group is transferred by the transcarboxylase to acetyl-CoA to form malonyl-CoA. This is Acetyl-coenzyme A carboxylase carboxyl transferase subunit beta from Bacillus mycoides (strain KBAB4) (Bacillus weihenstephanensis).